We begin with the raw amino-acid sequence, 206 residues long: uncharacterized protein (206 aa).

A disordered region spans residues 147–206; that stretch reads REEKAQKSKSKSRNQDERGSPLDERLGPKVSDLTLMERIFQVRRKPRKSRRDRRSRVSKR. The span at 159–173 shows a compositional bias: basic and acidic residues; it reads RNQDERGSPLDERLG. Residues 187–206 show a composition bias toward basic residues; the sequence is QVRRKPRKSRRDRRSRVSKR.

This is an uncharacterized protein from Schizosaccharomyces pombe (strain 972 / ATCC 24843) (Fission yeast).